The sequence spans 72 residues: Bowman-Birk type proteinase inhibitor 2a (72 aa).

7 disulfide bridges follow: C8/C61, C9/C24, C12/C57, C14/C22, C31/C38, C35/C50, and C40/C48.

Dimer.

Functionally, inhibits trypsin (IC(50)=0.9 nM) and alpha-chymotrypsin (IC(50)=1.1 nM). The polypeptide is Bowman-Birk type proteinase inhibitor 2a (Lathyrus sativus (White vetchling)).